The chain runs to 309 residues: Protein FdhE (309 aa).

The protein belongs to the FdhE family.

The protein resides in the cytoplasm. Necessary for formate dehydrogenase activity. This Escherichia coli O45:K1 (strain S88 / ExPEC) protein is Protein FdhE.